Reading from the N-terminus, the 350-residue chain is Mitogen-activated protein kinase HOG1 (350 aa).

Residues 20-299 (YTDLQPVGMG…AAQALAHEYL (280 aa)) form the Protein kinase domain. Residues 26–34 (VGMGAFGLV) and Lys49 each bind ATP. The active-site Proton acceptor is Asp141. A TXY motif is present at residues 171–173 (TGY).

The protein belongs to the protein kinase superfamily. Ser/Thr protein kinase family. MAP kinase subfamily. HOG1 sub-subfamily. It depends on Mg(2+) as a cofactor.

The protein resides in the cytoplasm. Its subcellular location is the nucleus. The enzyme catalyses L-seryl-[protein] + ATP = O-phospho-L-seryl-[protein] + ADP + H(+). It catalyses the reaction L-threonyl-[protein] + ATP = O-phospho-L-threonyl-[protein] + ADP + H(+). Proline-directed serine/threonine-protein kinase involved in a signal transduction pathway that is activated by changes in the osmolarity of the extracellular environment. Controls osmotic regulation of transcription of target genes. Involved in environmental stress response. Via the downstream MSN2 transcription factor, may play roles in the regulation of growth, conidiation, trap development, fatty acid metabolism and secondary metabolites biosynthesis. The sequence is that of Mitogen-activated protein kinase HOG1 from Arthrobotrys oligospora (strain ATCC 24927 / CBS 115.81 / DSM 1491) (Nematode-trapping fungus).